We begin with the raw amino-acid sequence, 23 residues long: Basic phospholipase A2 CTs-G6 (23 aa).

Ca(2+) is required as a cofactor. In terms of processing, contains 7 disulfide bonds. In terms of tissue distribution, expressed by the venom gland.

It localises to the secreted. The enzyme catalyses a 1,2-diacyl-sn-glycero-3-phosphocholine + H2O = a 1-acyl-sn-glycero-3-phosphocholine + a fatty acid + H(+). In terms of biological role, snake venom phospholipase A2 (PLA2) that induces local edema a few hours after injection (5-10 ug) in the hind paw. PLA2 catalyzes the calcium-dependent hydrolysis of the 2-acyl groups in 3-sn-phosphoglycerides. This is Basic phospholipase A2 CTs-G6 from Trimeresurus stejnegeri (Chinese green tree viper).